The chain runs to 758 residues: Relaxin receptor 1 (758 aa).

The Extracellular segment spans residues 1–408 (MTSGPFFFCV…LENLLASIIQ (408 aa)). An LDL-receptor class A domain is found at 26 to 63 (SCPLGSFPCGNISKCLPQLLHCNGVDDCGNQADEDNCG). 3 disulfides stabilise this stretch: C27–C40, C34–C53, and C47–C62. N36 carries an N-linked (GlcNAc...) asparagine glycan. Ca(2+) contacts are provided by L45, N48, V50, D52, D58, and E59. LRR repeat units follow at residues 105–125 (LCRD…PSVS), 126–148 (SNVT…SFRK), 149–172 (YHDL…AFRG), 173–196 (LHSL…VFED), 198–220 (HRLE…TFYG), 221–244 (LNSL…PLCQ), 246–269 (MPRL…TFIS), 270–293 (CNNL…AFTH), 294–317 (LQKL…IFKD), 319–341 (KELS…QFDY), and 342–365 (LAKL…MFRP). N127 carries N-linked (GlcNAc...) asparagine glycosylation. 2 N-linked (GlcNAc...) asparagine glycosylation sites follow: N264 and N272. N325 carries an N-linked (GlcNAc...) asparagine glycan. N368 carries N-linked (GlcNAc...) asparagine glycosylation. A helical membrane pass occupies residues 409–429 (RVFVWVVSAITCFGNIFVICM). Residues 430 to 443 (RPYIRSENKLHAMS) are Cytoplasmic-facing. The chain crosses the membrane as a helical span at residues 444–464 (IMSLCCADCLMGVYLFVIGAF). Residues 465-486 (DLKFRGEYRKHAQPWMESVHCQ) are Extracellular-facing. C485 and C563 are disulfide-bonded. The helical transmembrane segment at 487–507 (FMGSLAVLSTEVSVLLLTFLT) threads the bilayer. Residues 508 to 527 (LEKYICIVYPFRCLRPRKCR) lie on the Cytoplasmic side of the membrane. Residues 528 to 548 (TVAVLIFIWITGFIVAFAPLG) traverse the membrane as a helical segment. Residues 549 to 577 (NKEFFKNYYGTNGVCFPLHSEDTGSTGAQ) lie on the Extracellular side of the membrane. Residues 578–598 (IYSVVIFLGINLVAFIIIVFS) form a helical membrane-spanning segment. The Cytoplasmic segment spans residues 599-629 (YGSMFYSVHQSTITATEIQKQVKKEMILAKR). The helical transmembrane segment at 630 to 650 (FFFIVFTDALCWIPIFILKFL) threads the bilayer. Residues 651–660 (SLIRVEIPDT) are Extracellular-facing. The helical transmembrane segment at 661–681 (ITSWVVIFILPINSALNPIIY) threads the bilayer. The Cytoplasmic segment spans residues 682 to 758 (TLTTRPFKEM…SRSSRLNSYS (77 aa)).

It belongs to the G-protein coupled receptor 1 family. As to quaternary structure, interacts with C1QTNF8. In terms of tissue distribution, detected in brain cortex, and at low levels in testis.

Its subcellular location is the cell membrane. Its function is as follows. Receptor for relaxins. The activity of this receptor is mediated by G proteins leading to stimulation of adenylate cyclase and an increase of cAMP. Binding of the ligand may also activate a tyrosine kinase pathway that inhibits the activity of a phosphodiesterase that degrades cAMP. The polypeptide is Relaxin receptor 1 (Rxfp1) (Rattus norvegicus (Rat)).